Consider the following 110-residue polypeptide: uncharacterized protein (110 aa).

The tract at residues 86 to 110 is disordered; the sequence is SEEIDEPVMKKRHRRKGSPHRAPFF. The segment covering 95 to 104 has biased composition (basic residues); that stretch reads KKRHRRKGSP.

This is an uncharacterized protein from Arabidopsis thaliana (Mouse-ear cress).